A 150-amino-acid chain; its full sequence is Cell division protein SepF (150 aa).

The protein belongs to the SepF family. Homodimer. Interacts with FtsZ.

Its subcellular location is the cytoplasm. Cell division protein that is part of the divisome complex and is recruited early to the Z-ring. Probably stimulates Z-ring formation, perhaps through the cross-linking of FtsZ protofilaments. Its function overlaps with FtsA. The polypeptide is Cell division protein SepF (Clostridium kluyveri (strain NBRC 12016)).